The sequence spans 153 residues: Small ribosomal subunit protein uS17 (153 aa).

This sequence belongs to the universal ribosomal protein uS17 family.

This Anopheles gambiae (African malaria mosquito) protein is Small ribosomal subunit protein uS17 (RpS11).